We begin with the raw amino-acid sequence, 89 residues long: Probable Fe(2+)-trafficking protein (89 aa).

The protein belongs to the Fe(2+)-trafficking protein family.

Its function is as follows. Could be a mediator in iron transactions between iron acquisition and iron-requiring processes, such as synthesis and/or repair of Fe-S clusters in biosynthetic enzymes. The sequence is that of Probable Fe(2+)-trafficking protein from Legionella pneumophila (strain Lens).